The primary structure comprises 274 residues: 2,3,4,5-tetrahydropyridine-2,6-dicarboxylate N-succinyltransferase (274 aa).

This sequence belongs to the transferase hexapeptide repeat family.

It localises to the cytoplasm. It carries out the reaction (S)-2,3,4,5-tetrahydrodipicolinate + succinyl-CoA + H2O = (S)-2-succinylamino-6-oxoheptanedioate + CoA. It participates in amino-acid biosynthesis; L-lysine biosynthesis via DAP pathway; LL-2,6-diaminopimelate from (S)-tetrahydrodipicolinate (succinylase route): step 1/3. This Proteus mirabilis (strain HI4320) protein is 2,3,4,5-tetrahydropyridine-2,6-dicarboxylate N-succinyltransferase.